The primary structure comprises 632 residues: Biosynthetic arginine decarboxylase (632 aa).

An N6-(pyridoxal phosphate)lysine modification is found at Lys101. 281–291 (FDVGGGLGVDY) contributes to the substrate binding site.

It belongs to the Orn/Lys/Arg decarboxylase class-II family. SpeA subfamily. Mg(2+) is required as a cofactor. It depends on pyridoxal 5'-phosphate as a cofactor.

The catalysed reaction is L-arginine + H(+) = agmatine + CO2. The protein operates within amine and polyamine biosynthesis; agmatine biosynthesis; agmatine from L-arginine: step 1/1. Its function is as follows. Catalyzes the biosynthesis of agmatine from arginine. This Escherichia coli O157:H7 (strain EC4115 / EHEC) protein is Biosynthetic arginine decarboxylase.